The chain runs to 192 residues: Protein ORF45 (192 aa).

Functionally, plays a role in the expression of ORF41, which itself is required for late gene expression. The sequence is that of Protein ORF45 from Autographa californica nuclear polyhedrosis virus (AcMNPV).